Consider the following 317-residue polypeptide: Beta-ketoacyl-[acyl-carrier-protein] synthase III (317 aa).

Residues C112 and H244 contribute to the active site. The ACP-binding stretch occupies residues 245-249; it reads QANIR. The active site involves N274.

The protein belongs to the thiolase-like superfamily. FabH family. In terms of assembly, homodimer.

The protein localises to the cytoplasm. It carries out the reaction malonyl-[ACP] + acetyl-CoA + H(+) = 3-oxobutanoyl-[ACP] + CO2 + CoA. The protein operates within lipid metabolism; fatty acid biosynthesis. In terms of biological role, catalyzes the condensation reaction of fatty acid synthesis by the addition to an acyl acceptor of two carbons from malonyl-ACP. Catalyzes the first condensation reaction which initiates fatty acid synthesis and may therefore play a role in governing the total rate of fatty acid production. Possesses both acetoacetyl-ACP synthase and acetyl transacylase activities. Its substrate specificity determines the biosynthesis of branched-chain and/or straight-chain of fatty acids. The polypeptide is Beta-ketoacyl-[acyl-carrier-protein] synthase III (Rickettsia typhi (strain ATCC VR-144 / Wilmington)).